The following is a 104-amino-acid chain: Cytochrome c oxidase assembly factor 6 (104 aa).

Positions 1–22 are disordered; it reads MGLFSFDGGKKESQPPNTRSQR. The region spanning 22–76 is the CHCH domain; sequence RKLCWESRDAFFQCLDKADILDAMDPKNSKSIKSHCKVENEKFEENCAHSWIKYF. Positions 25–35 match the Cx9C motif motif; that stretch reads CWESRDAFFQC. 2 cysteine pairs are disulfide-bonded: C25–C68 and C35–C57. A Cx10C motif motif is present at residues 57 to 68; sequence CKVENEKFEENC.

Belongs to the cytochrome c oxidase subunit 6B family. As to quaternary structure, interacts with COX2.

It localises to the cytoplasm. The protein localises to the nucleus. Its subcellular location is the mitochondrion intermembrane space. Involved in the maturation of the mitochondrial respiratory chain complex IV subunit MT-CO2/COX2. Thereby, may regulate early steps of complex IV assembly. Mitochondrial respiratory chain complex IV or cytochrome c oxidase is the component of the respiratory chain that catalyzes the transfer of electrons from intermembrane space cytochrome c to molecular oxygen in the matrix and as a consequence contributes to the proton gradient involved in mitochondrial ATP synthesis. May also be required for efficient formation of respiratory supercomplexes comprised of complexes III and IV. This chain is Cytochrome c oxidase assembly factor 6, found in Saccharomyces cerevisiae (strain ATCC 204508 / S288c) (Baker's yeast).